Reading from the N-terminus, the 238-residue chain is 2-C-methyl-D-erythritol 4-phosphate cytidylyltransferase (238 aa).

Belongs to the IspD/TarI cytidylyltransferase family. IspD subfamily.

The catalysed reaction is 2-C-methyl-D-erythritol 4-phosphate + CTP + H(+) = 4-CDP-2-C-methyl-D-erythritol + diphosphate. It participates in isoprenoid biosynthesis; isopentenyl diphosphate biosynthesis via DXP pathway; isopentenyl diphosphate from 1-deoxy-D-xylulose 5-phosphate: step 2/6. In terms of biological role, catalyzes the formation of 4-diphosphocytidyl-2-C-methyl-D-erythritol from CTP and 2-C-methyl-D-erythritol 4-phosphate (MEP). The sequence is that of 2-C-methyl-D-erythritol 4-phosphate cytidylyltransferase from Paraburkholderia phytofirmans (strain DSM 17436 / LMG 22146 / PsJN) (Burkholderia phytofirmans).